Here is a 32-residue protein sequence, read N- to C-terminus: Dermaseptin-L1 (32 aa).

As to expression, expressed by the skin glands.

It is found in the secreted. Functionally, antimicrobial peptide active against the Gram-negative bacterium E.coli (MIC=8 uM) but inactive against the Gram-positive bacterium S.aureus. Also inhibits growth of zoospores of the chytrid fungus B.dendrobatidis at high concentrations (above 25 uM). Shows anticancer activities since it is cytolytic against HepG2 human hepatoma-derived cells (LC(50)=45 uM). Is only weakly hemolytic on human erythrocytes. This is Dermaseptin-L1 from Agalychnis lemur (Lemur leaf frog).